The sequence spans 192 residues: Pyridoxal 5'-phosphate synthase subunit PdxT (192 aa).

Residue 47–49 (GES) coordinates L-glutamine. Residue C78 is the Nucleophile of the active site. Residues R105 and 139-140 (IR) contribute to the L-glutamine site. Residues H175 and E177 each act as charge relay system in the active site.

It belongs to the glutaminase PdxT/SNO family. As to quaternary structure, in the presence of PdxS, forms a dodecamer of heterodimers. Only shows activity in the heterodimer.

It carries out the reaction aldehydo-D-ribose 5-phosphate + D-glyceraldehyde 3-phosphate + L-glutamine = pyridoxal 5'-phosphate + L-glutamate + phosphate + 3 H2O + H(+). The catalysed reaction is L-glutamine + H2O = L-glutamate + NH4(+). It participates in cofactor biosynthesis; pyridoxal 5'-phosphate biosynthesis. Functionally, catalyzes the hydrolysis of glutamine to glutamate and ammonia as part of the biosynthesis of pyridoxal 5'-phosphate. The resulting ammonia molecule is channeled to the active site of PdxS. The sequence is that of Pyridoxal 5'-phosphate synthase subunit PdxT from Solibacter usitatus (strain Ellin6076).